Here is a 406-residue protein sequence, read N- to C-terminus: Peptidase T (406 aa).

Position 82 (His82) interacts with Zn(2+). Residue Asp84 is part of the active site. Asp142 contacts Zn(2+). Glu176 serves as the catalytic Proton acceptor. Positions 177, 199, and 381 each coordinate Zn(2+).

This sequence belongs to the peptidase M20B family. Requires Zn(2+) as cofactor.

The protein resides in the cytoplasm. The enzyme catalyses Release of the N-terminal residue from a tripeptide.. Cleaves the N-terminal amino acid of tripeptides. This Streptococcus agalactiae serotype V (strain ATCC BAA-611 / 2603 V/R) protein is Peptidase T.